Consider the following 476-residue polypeptide: Ribulose bisphosphate carboxylase large chain (476 aa).

The substrate site is built by asparagine 124 and threonine 174. Catalysis depends on lysine 176, which acts as the Proton acceptor. Lysine 178 contributes to the substrate binding site. Lysine 202, aspartate 204, and glutamate 205 together coordinate Mg(2+). Position 202 is an N6-carboxylysine (lysine 202). Histidine 295 (proton acceptor) is an active-site residue. Positions 296, 328, and 380 each coordinate substrate.

Belongs to the RuBisCO large chain family. Type I subfamily. Heterohexadecamer of 8 large chains and 8 small chains; disulfide-linked. The disulfide link is formed within the large subunit homodimers. It depends on Mg(2+) as a cofactor. In terms of processing, the disulfide bond which can form in the large chain dimeric partners within the hexadecamer appears to be associated with oxidative stress and protein turnover.

Its subcellular location is the carboxysome. The catalysed reaction is 2 (2R)-3-phosphoglycerate + 2 H(+) = D-ribulose 1,5-bisphosphate + CO2 + H2O. The enzyme catalyses D-ribulose 1,5-bisphosphate + O2 = 2-phosphoglycolate + (2R)-3-phosphoglycerate + 2 H(+). Its function is as follows. RuBisCO catalyzes two reactions: the carboxylation of D-ribulose 1,5-bisphosphate, the primary event in carbon dioxide fixation, as well as the oxidative fragmentation of the pentose substrate in the photorespiration process. Both reactions occur simultaneously and in competition at the same active site. In Cyanothece sp. (strain PCC 7425 / ATCC 29141), this protein is Ribulose bisphosphate carboxylase large chain.